Consider the following 111-residue polypeptide: Putative membrane protein insertion efficiency factor (111 aa).

The protein belongs to the UPF0161 family.

It is found in the cell inner membrane. Its function is as follows. Could be involved in insertion of integral membrane proteins into the membrane. In Methylobacterium nodulans (strain LMG 21967 / CNCM I-2342 / ORS 2060), this protein is Putative membrane protein insertion efficiency factor.